Here is a 364-residue protein sequence, read N- to C-terminus: Mannose-1-phosphate guanyltransferase (364 aa).

The protein belongs to the transferase hexapeptide repeat family.

It localises to the cytoplasm. The catalysed reaction is alpha-D-mannose 1-phosphate + GTP + H(+) = GDP-alpha-D-mannose + diphosphate. The protein operates within nucleotide-sugar biosynthesis; GDP-alpha-D-mannose biosynthesis; GDP-alpha-D-mannose from alpha-D-mannose 1-phosphate (GTP route): step 1/1. Its function is as follows. Involved in cell wall synthesis where it is required for glycosylation. Involved in cell cycle progression through cell-size checkpoint. The polypeptide is Mannose-1-phosphate guanyltransferase (MPG1) (Pichia angusta (Yeast)).